We begin with the raw amino-acid sequence, 333 residues long: Probable tRNA pseudouridine synthase B (333 aa).

The active-site Nucleophile is aspartate 71. Residues 238-313 (LPKIWVRDSA…LVARTDRVVM (76 aa)) form the PUA domain.

It belongs to the pseudouridine synthase TruB family. Type 2 subfamily.

It catalyses the reaction uridine(55) in tRNA = pseudouridine(55) in tRNA. Could be responsible for synthesis of pseudouridine from uracil-55 in the psi GC loop of transfer RNAs. This is Probable tRNA pseudouridine synthase B from Pyrobaculum calidifontis (strain DSM 21063 / JCM 11548 / VA1).